A 139-amino-acid chain; its full sequence is MLSEETIRVIKSTVPLLKEHGTEITARMYELLFSKYPKTKELFAGASEEQPKKLANAIIAYATYIDRLEELDNAISTIARSHVRRNVKPEHYPLVKECLLQAIEEVLNPGEEVLKAWEEAYDFLAKTLITLEKKLYSQP.

One can recognise a Globin domain in the interval 1 to 133 (MLSEETIRVI…LAKTLITLEK (133 aa)).

The protein belongs to the globin family.

This is an uncharacterized protein from Aquifex aeolicus (strain VF5).